A 121-amino-acid polypeptide reads, in one-letter code: Met-lysine-1b (121 aa).

The signal sequence occupies residues 1–22; sequence MKSFVFALALIVAFACISESKS. Residues 23-69 constitute a propeptide that is removed on maturation; it reads DHTGYEEEENLEDSELTDLVAAALLEELAEASEMDDLSYTEEAGGER. The residue at position 120 (methionine 120) is a Methionine amide.

As to expression, expressed by the venom gland.

The protein resides in the secreted. In terms of biological role, shows no antimicrobial activity against Gram-positive bacterium B.subtilis B-501 or Gram-negative bacterium E.coli DH5-alpha at concentrations up to 20 ug/ml. Shows no toxicity towards insect (S.carnaria) larvae. This is Met-lysine-1b from Lachesana tarabaevi (Spider).